The following is a 440-amino-acid chain: Serine hydroxymethyltransferase (440 aa).

Residues Leu-119 and 123–125 (GHL) contribute to the (6S)-5,6,7,8-tetrahydrofolate site. At Lys-228 the chain carries N6-(pyridoxal phosphate)lysine. 370–372 (SPF) provides a ligand contact to (6S)-5,6,7,8-tetrahydrofolate.

This sequence belongs to the SHMT family. Homodimer. Requires pyridoxal 5'-phosphate as cofactor.

The protein resides in the cytoplasm. It carries out the reaction (6R)-5,10-methylene-5,6,7,8-tetrahydrofolate + glycine + H2O = (6S)-5,6,7,8-tetrahydrofolate + L-serine. The protein operates within one-carbon metabolism; tetrahydrofolate interconversion. Its pathway is amino-acid biosynthesis; glycine biosynthesis; glycine from L-serine: step 1/1. Catalyzes the reversible interconversion of serine and glycine with tetrahydrofolate (THF) serving as the one-carbon carrier. This reaction serves as the major source of one-carbon groups required for the biosynthesis of purines, thymidylate, methionine, and other important biomolecules. Also exhibits THF-independent aldolase activity toward beta-hydroxyamino acids, producing glycine and aldehydes, via a retro-aldol mechanism. The protein is Serine hydroxymethyltransferase of Chlorobium luteolum (strain DSM 273 / BCRC 81028 / 2530) (Pelodictyon luteolum).